A 300-amino-acid polypeptide reads, in one-letter code: MKTGNQFNTVALVGRSNTPGIAEPLATLADSIATLGFEVVFEGDTAREIGIAGYPALTPAEIGARADVAIVLGGDGTMLGIGRQLAPYRTPLIGINHGRLGFITDIAASDMQALVPVMLAGKFEREERSLLEARIVRDGEPIYHALAFNDVVVNRSGFSGMVELRASVDGRYMYNQRSDGLIVATPTGSTAYALSSAGPILHPQLAGIVLVPIAPHALSNRPIVLPDDSKIAIQIVGGRDVNVNFDMQSFTSLELNDTIEVRRSKHTVPFLHPIGYSYYTTLRKKLHWNEHASNEDDKAS.

The active-site Proton acceptor is aspartate 75. Residues 75-76 (DG), 149-150 (ND), arginine 177, aspartate 179, 190-195 (TAYALS), alanine 214, and glutamine 248 each bind NAD(+).

Belongs to the NAD kinase family. A divalent metal cation is required as a cofactor.

Its subcellular location is the cytoplasm. The enzyme catalyses NAD(+) + ATP = ADP + NADP(+) + H(+). Involved in the regulation of the intracellular balance of NAD and NADP, and is a key enzyme in the biosynthesis of NADP. Catalyzes specifically the phosphorylation on 2'-hydroxyl of the adenosine moiety of NAD to yield NADP. This chain is NAD kinase, found in Burkholderia cenocepacia (strain ATCC BAA-245 / DSM 16553 / LMG 16656 / NCTC 13227 / J2315 / CF5610) (Burkholderia cepacia (strain J2315)).